The chain runs to 420 residues: Glucose-1-phosphate adenylyltransferase (420 aa).

Alpha-D-glucose 1-phosphate-binding positions include Tyr107, Gly172, 187–188, and Ser205; that span reads EK.

The protein belongs to the bacterial/plant glucose-1-phosphate adenylyltransferase family. In terms of assembly, homotetramer.

It carries out the reaction alpha-D-glucose 1-phosphate + ATP + H(+) = ADP-alpha-D-glucose + diphosphate. The protein operates within glycan biosynthesis; glycogen biosynthesis. In terms of biological role, involved in the biosynthesis of ADP-glucose, a building block required for the elongation reactions to produce glycogen. Catalyzes the reaction between ATP and alpha-D-glucose 1-phosphate (G1P) to produce pyrophosphate and ADP-Glc. This is Glucose-1-phosphate adenylyltransferase from Rhizobium radiobacter (Agrobacterium tumefaciens).